We begin with the raw amino-acid sequence, 1159 residues long: Cation channel sperm-associated auxiliary subunit gamma (1159 aa).

Residues 1 to 35 (MCGPAMFPAGPRWPRVRVLQVLWALLAVLLASRRL) form the signal peptide. Topologically, residues 36-1065 (WAIKDFEECT…IHGLPLSPKR (1030 aa)) are extracellular. Disulfide bonds link Cys-44–Cys-105 and Cys-159–Cys-165. N-linked (GlcNAc...) asparagine glycosylation occurs at Asn-102. Asn-177 is a glycosylation site (N-linked (GlcNAc...) asparagine). The cysteines at positions 288 and 343 are disulfide-linked. The N-linked (GlcNAc...) asparagine glycan is linked to Asn-355. Cys-394 and Cys-402 are disulfide-bonded. N-linked (GlcNAc...) asparagine glycosylation is found at Asn-426 and Asn-574. 5 disulfide bridges follow: Cys-638/Cys-860, Cys-806/Cys-834, Cys-882/Cys-1046, Cys-909/Cys-918, and Cys-1010/Cys-1016. The helical transmembrane segment at 1066–1087 (ALFILMVSLSVFVGLVIFYIAF) threads the bilayer. Topologically, residues 1088–1159 (CLLWPLVVKG…KEAVERQLMT (72 aa)) are cytoplasmic. The interval 1138–1159 (FSSRMTEDKAEPKEAVERQLMT) is disordered. Over residues 1142–1159 (MTEDKAEPKEAVERQLMT) the composition is skewed to basic and acidic residues.

This sequence belongs to the CATSPERG family. In terms of assembly, component of the CatSper complex or CatSpermasome composed of the core pore-forming members CATSPER1, CATSPER2, CATSPER3 and CATSPER4 as well as auxiliary members CATSPERB, CATSPERG, CATSPERD, CATSPERE, CATSPERZ, SCLO6C1, TMEM249, TMEM262 and EFCAB9. HSPA1 may be an additional auxiliary complex member. The core complex members CATSPER1, CATSPER2, CATSPER3 and CATSPER4 form a heterotetrameric channel. The auxiliary CATSPERB, CATSPERG, CATSPERD and CATSPERE subunits form a pavilion-like structure over the pore which stabilizes the complex through interactions with CATSPER4, CATSPER3, CATSPER1 and CATSPER2 respectively. TMEM262/CATSPERH interacts with CATSPERB, further stabilizing the complex. C2CD6/CATSPERT interacts at least with CATSPERD and is required for targeting the CatSper complex in the flagellar membrane.

The protein localises to the cell projection. It localises to the cilium. The protein resides in the flagellum membrane. In terms of biological role, auxiliary component of the CatSper complex, a complex involved in sperm cell hyperactivation. Sperm cell hyperactivation is needed for sperm motility which is essential late in the preparation of sperm for fertilization. In Macaca fascicularis (Crab-eating macaque), this protein is Cation channel sperm-associated auxiliary subunit gamma.